A 139-amino-acid polypeptide reads, in one-letter code: Aspartate 1-decarboxylase (139 aa).

The active-site Schiff-base intermediate with substrate; via pyruvic acid is S26. Position 26 is a pyruvic acid (Ser) (S26). T58 provides a ligand contact to substrate. Catalysis depends on Y59, which acts as the Proton donor. 72 to 74 lines the substrate pocket; sequence GGA.

It belongs to the PanD family. In terms of assembly, heterooctamer of four alpha and four beta subunits. Requires pyruvate as cofactor. In terms of processing, is synthesized initially as an inactive proenzyme, which is activated by self-cleavage at a specific serine bond to produce a beta-subunit with a hydroxyl group at its C-terminus and an alpha-subunit with a pyruvoyl group at its N-terminus.

It localises to the cytoplasm. The catalysed reaction is L-aspartate + H(+) = beta-alanine + CO2. Its pathway is cofactor biosynthesis; (R)-pantothenate biosynthesis; beta-alanine from L-aspartate: step 1/1. Functionally, catalyzes the pyruvoyl-dependent decarboxylation of aspartate to produce beta-alanine. The protein is Aspartate 1-decarboxylase of Microcystis aeruginosa (strain NIES-843 / IAM M-2473).